Reading from the N-terminus, the 576-residue chain is Putative export ATP-binding/permease protein RF_0214 (576 aa).

The ABC transmembrane type-1 domain occupies 20–303; that stretch reads LIIVMISLLS…IFELLSEIHL (284 aa). 6 helical membrane passes run 21–41, 61–81, 135–155, 158–178, 242–262, and 277–297; these read IIVM…GSVF, ILYI…RSYF, FLSF…LMFF, FKLA…LIKF, ALFF…VVWI, and IISF…IFEL. One can recognise an ABC transporter domain in the interval 336–572; that stretch reads IEFKNVDFTY…SEIYRNICRE (237 aa). 371-378 is a binding site for ATP; that stretch reads GRSGGGKS.

Belongs to the ABC transporter superfamily. In terms of assembly, homodimer.

The protein localises to the cell inner membrane. Its function is as follows. Part of an ABC transporter complex. Transmembrane domains (TMD) form a pore in the inner membrane and the ATP-binding domain (NBD) is responsible for energy generation. The sequence is that of Putative export ATP-binding/permease protein RF_0214 from Rickettsia felis (strain ATCC VR-1525 / URRWXCal2) (Rickettsia azadi).